The sequence spans 118 residues: Na(+)/H(+) antiporter subunit G1 (118 aa).

3 helical membrane passes run 9-29 (VSII…TGLI), 47-67 (LGAM…EGYV), and 69-89 (MQLI…SHLI).

Belongs to the CPA3 antiporters (TC 2.A.63) subunit G family. In terms of assembly, may form a heterooligomeric complex that consists of seven subunits: mnhA1, mnhB1, mnhC1, mnhD1, mnhE1, mnhF1 and mnhG1.

The protein resides in the cell membrane. Functionally, mnh complex is a Na(+)/H(+) antiporter involved in Na(+) excretion. This Staphylococcus epidermidis (strain ATCC 35984 / DSM 28319 / BCRC 17069 / CCUG 31568 / BM 3577 / RP62A) protein is Na(+)/H(+) antiporter subunit G1 (mnhG1).